A 1154-amino-acid polypeptide reads, in one-letter code: Kinesin-like protein KIN-7E, chloroplastic (1154 aa).

Composition is skewed to low complexity over residues 1-14 and 29-109; these read MSSS…SISP and VAAA…PPVA. Residues 1–21 constitute a chloroplast transit peptide; sequence MSSSSRPGRASISPFRSRRTS. The interval 1-109 is disordered; it reads MSSSSRPGRA…RAAGRAPPVA (109 aa). In terms of domain architecture, Kinesin motor spans 119 to 437; sequence NIMVTVRFRP…LKFAHRSKHI (319 aa). 199 to 206 is a binding site for ATP; that stretch reads GVTSSGKT. Residues 441–523 are a coiled coil; sequence ASQNKIIDEK…AALMGRIQRL (83 aa). Residues 620–674 form a disordered region; that stretch reads LSTSVDSESTASGSPSFSRSSQQKHPLLDLKDGRRKSMTRKGDDPALTDSFPGRT. The span at 628–640 shows a compositional bias: low complexity; it reads STASGSPSFSRSS. Coiled-coil stretches lie at residues 734 to 761 and 801 to 845; these read DSQI…LEQR and ADNR…DNVA. Positions 838–885 are disordered; sequence AKNEDNVASMQSSEPSSTSSNPRDLANEVASHSKMPSRTTEDHTESPL. A compositionally biased stretch (low complexity) spans 846–857; the sequence is SMQSSEPSSTSS. Positions 894–967 form a coiled coil; sequence AEIENLKLDK…DLAAAKDQTR (74 aa).

It belongs to the TRAFAC class myosin-kinesin ATPase superfamily. Kinesin family. KIN-7 subfamily.

The protein localises to the plastid. Its subcellular location is the chloroplast. The polypeptide is Kinesin-like protein KIN-7E, chloroplastic (Oryza sativa subsp. japonica (Rice)).